The primary structure comprises 78 residues: Short neurotoxin OH-5 (78 aa).

Positions 1–21 (MKNLLLTFLVVTIVCLDLGYT) are cleaved as a signal peptide. 4 disulfide bridges follow: cysteine 24-cysteine 40, cysteine 33-cysteine 58, cysteine 62-cysteine 70, and cysteine 71-cysteine 76.

This sequence belongs to the three-finger toxin family. Short-chain subfamily. Expressed by the venom gland.

The protein localises to the secreted. Its function is as follows. This three-finger toxin binds and inhibits the nicotinic acetylcholine receptor (nAChR). This chain is Short neurotoxin OH-5, found in Ophiophagus hannah (King cobra).